The following is a 320-amino-acid chain: Aspartate carbamoyltransferase catalytic subunit (320 aa).

Carbamoyl phosphate-binding residues include arginine 58 and threonine 59. Lysine 86 is an L-aspartate binding site. The carbamoyl phosphate site is built by arginine 108, histidine 136, and glutamine 139. Residues arginine 169 and arginine 223 each contribute to the L-aspartate site. The carbamoyl phosphate site is built by glycine 264 and proline 265.

The protein belongs to the aspartate/ornithine carbamoyltransferase superfamily. ATCase family. In terms of assembly, heterododecamer (2C3:3R2) of six catalytic PyrB chains organized as two trimers (C3), and six regulatory PyrI chains organized as three dimers (R2).

The enzyme catalyses carbamoyl phosphate + L-aspartate = N-carbamoyl-L-aspartate + phosphate + H(+). Its pathway is pyrimidine metabolism; UMP biosynthesis via de novo pathway; (S)-dihydroorotate from bicarbonate: step 2/3. Catalyzes the condensation of carbamoyl phosphate and aspartate to form carbamoyl aspartate and inorganic phosphate, the committed step in the de novo pyrimidine nucleotide biosynthesis pathway. In Cereibacter sphaeroides (strain ATCC 17029 / ATH 2.4.9) (Rhodobacter sphaeroides), this protein is Aspartate carbamoyltransferase catalytic subunit.